The sequence spans 783 residues: LPS-assembly protein LptD (783 aa).

An N-terminal signal peptide occupies residues 1-24; it reads MSCFSRTFLAASISAALFAPQIQA.

Belongs to the LptD family. In terms of assembly, component of the lipopolysaccharide transport and assembly complex. Interacts with LptE and LptA.

It localises to the cell outer membrane. In terms of biological role, together with LptE, is involved in the assembly of lipopolysaccharide (LPS) at the surface of the outer membrane. The protein is LPS-assembly protein LptD of Vibrio cholerae serotype O1 (strain ATCC 39315 / El Tor Inaba N16961).